A 302-amino-acid chain; its full sequence is 4-hydroxy-tetrahydrodipicolinate synthase (302 aa).

Residue Thr-55 coordinates pyruvate. The active-site Proton donor/acceptor is the Tyr-144. The Schiff-base intermediate with substrate role is filled by Lys-172. Val-214 contacts pyruvate.

This sequence belongs to the DapA family. As to quaternary structure, homotetramer; dimer of dimers.

The protein resides in the cytoplasm. It carries out the reaction L-aspartate 4-semialdehyde + pyruvate = (2S,4S)-4-hydroxy-2,3,4,5-tetrahydrodipicolinate + H2O + H(+). It functions in the pathway amino-acid biosynthesis; L-lysine biosynthesis via DAP pathway; (S)-tetrahydrodipicolinate from L-aspartate: step 3/4. Functionally, catalyzes the condensation of (S)-aspartate-beta-semialdehyde [(S)-ASA] and pyruvate to 4-hydroxy-tetrahydrodipicolinate (HTPA). This chain is 4-hydroxy-tetrahydrodipicolinate synthase, found in Synechococcus sp. (strain CC9605).